We begin with the raw amino-acid sequence, 228 residues long: Cytochrome c oxidase subunit 2 (228 aa).

Over 1–14 (MPHASQLSLQEAMG) the chain is Mitochondrial intermembrane. The helical transmembrane segment at 15–45 (PTMEEVIFLHDHVLLLTCLMTMVITMFTLTA) threads the bilayer. At 46-59 (TTTALTHNDPTEEV) the chain is on the mitochondrial matrix side. Residues 60–87 (EQLEAAWTVAPIMILILTALPSVRSLYL) form a helical membrane-spanning segment. Residues 88–228 (MEEVFNPYLT…HFEQWLISEQ (141 aa)) are Mitochondrial intermembrane-facing. Cu cation is bound by residues H162, C197, E199, C201, H205, and M208. E199 is a Mg(2+) binding site.

Belongs to the cytochrome c oxidase subunit 2 family. In terms of assembly, component of the cytochrome c oxidase (complex IV, CIV), a multisubunit enzyme composed of 14 subunits. The complex is composed of a catalytic core of 3 subunits MT-CO1, MT-CO2 and MT-CO3, encoded in the mitochondrial DNA, and 11 supernumerary subunits COX4I, COX5A, COX5B, COX6A, COX6B, COX6C, COX7A, COX7B, COX7C, COX8 and NDUFA4, which are encoded in the nuclear genome. The complex exists as a monomer or a dimer and forms supercomplexes (SCs) in the inner mitochondrial membrane with NADH-ubiquinone oxidoreductase (complex I, CI) and ubiquinol-cytochrome c oxidoreductase (cytochrome b-c1 complex, complex III, CIII), resulting in different assemblies (supercomplex SCI(1)III(2)IV(1) and megacomplex MCI(2)III(2)IV(2)). Found in a complex with TMEM177, COA6, COX18, COX20, SCO1 and SCO2. Interacts with TMEM177 in a COX20-dependent manner. Interacts with COX20. Interacts with COX16. Cu cation serves as cofactor.

It localises to the mitochondrion inner membrane. It carries out the reaction 4 Fe(II)-[cytochrome c] + O2 + 8 H(+)(in) = 4 Fe(III)-[cytochrome c] + 2 H2O + 4 H(+)(out). Functionally, component of the cytochrome c oxidase, the last enzyme in the mitochondrial electron transport chain which drives oxidative phosphorylation. The respiratory chain contains 3 multisubunit complexes succinate dehydrogenase (complex II, CII), ubiquinol-cytochrome c oxidoreductase (cytochrome b-c1 complex, complex III, CIII) and cytochrome c oxidase (complex IV, CIV), that cooperate to transfer electrons derived from NADH and succinate to molecular oxygen, creating an electrochemical gradient over the inner membrane that drives transmembrane transport and the ATP synthase. Cytochrome c oxidase is the component of the respiratory chain that catalyzes the reduction of oxygen to water. Electrons originating from reduced cytochrome c in the intermembrane space (IMS) are transferred via the dinuclear copper A center (CU(A)) of subunit 2 and heme A of subunit 1 to the active site in subunit 1, a binuclear center (BNC) formed by heme A3 and copper B (CU(B)). The BNC reduces molecular oxygen to 2 water molecules using 4 electrons from cytochrome c in the IMS and 4 protons from the mitochondrial matrix. In Lycodon semicarinatus (Ryukyu odd-tooth snake), this protein is Cytochrome c oxidase subunit 2 (MT-CO2).